A 572-amino-acid polypeptide reads, in one-letter code: Phospholipase B-like protein B (572 aa).

Positions 1-28 (MNKLKSNFILNIVILFTILIFNINFINC) are cleaved as a signal peptide. 6 N-linked (GlcNAc...) asparagine glycosylation sites follow: Asn-73, Asn-138, Asn-219, Asn-427, Asn-544, and Asn-564.

The protein belongs to the phospholipase B-like family.

The protein localises to the secreted. In terms of biological role, probable phospholipase. In Dictyostelium discoideum (Social amoeba), this protein is Phospholipase B-like protein B (plbB).